The chain runs to 217 residues: Large ribosomal subunit protein uL1 (217 aa).

Belongs to the universal ribosomal protein uL1 family.

The polypeptide is Large ribosomal subunit protein uL1 (RpL10Ab) (Drosophila melanogaster (Fruit fly)).